The chain runs to 377 residues: Membrane protein MLC1 (377 aa).

Positions 1–23 are enriched in basic and acidic residues; it reads MTQEPFREELAYDRMPTLERGRQ. Residues 1–36 are disordered; the sequence is MTQEPFREELAYDRMPTLERGRQDPASYAPDAKPSD. Helical transmembrane passes span 52–72, 82–100, 111–131, and 144–164; these read WVFS…SLYL, YLRC…SFTV, FQIL…WFGC, and FNLI…IIAA. 2 positions are modified to phosphoserine: S177 and S179. Helical transmembrane passes span 199–219, 230–250, 257–277, and 304–324; these read SVVE…ALNV, VTFF…HVAA, LVEV…TASG, and LLLL…GTAI.

In terms of assembly, interacts with ATP1B1. Part of a complex containing ATP1B1, TRPV4, AQP4 and HEPACAM. Expressed in the brain, with highest levels found in the amygdala, nucleus caudatus, thalamus and hippocampus.

The protein resides in the membrane. The protein localises to the cell membrane. Its subcellular location is the cytoplasm. It is found in the perinuclear region. It localises to the endoplasmic reticulum. Functionally, transmembrane protein mainly expressed in brain astrocytes that may play a role in transport across the blood-brain and brain-cerebrospinal fluid barriers. Regulates the response of astrocytes to hypo-osmosis by promoting calcium influx. May function as regulatory protein of membrane protein complexes such as ion channels. The protein is Membrane protein MLC1 of Homo sapiens (Human).